The sequence spans 691 residues: T-box transcription factor TBX2-B (691 aa).

Positions 104 to 277 (LWDQFHKIGT…HNPFAKGFRD (174 aa)) form a DNA-binding region, T-box. Disordered regions lie at residues 301-440 (CKAD…SLSK) and 612-691 (NLLT…ESPK). Positions 325–335 (HSPLSAAPSPL) are enriched in low complexity. Composition is skewed to basic and acidic residues over residues 340 to 361 (TNREEKFGADSDQELDRREVRS), 378 to 402 (RLEDRGKDKSTPEKKSDSPESRKDG), and 415 to 433 (SLEKDKVESRRKEDSKSDP). Low complexity predominate over residues 624-639 (PGSESSKPGSSRESSP). A coiled-coil region spans residues 659–684 (SMKDSINELQRIQRLVSGLERQREVS). The span at 678–691 (ERQREVSPGRESPK) shows a compositional bias: basic and acidic residues.

In terms of assembly, binds DNA as a monomer.

The protein resides in the nucleus. In terms of biological role, transcription factor which acts as a transcriptional repressor. May also function as a transcriptional activator. Binds to the palindromic T site 5'-TTCACACCTAGGTGTGAA-3' DNA sequence, or a half-site, which are present in the regulatory region of several genes. This is T-box transcription factor TBX2-B (tbx2-b) from Xenopus laevis (African clawed frog).